Consider the following 335-residue polypeptide: Beta-hexosaminidase (335 aa).

Residues D60, R68, R133, and 163–164 (KH) each bind substrate. Residue H176 is the Proton donor/acceptor of the active site. Catalysis depends on D247, which acts as the Nucleophile.

It belongs to the glycosyl hydrolase 3 family. NagZ subfamily.

The protein resides in the cytoplasm. The catalysed reaction is Hydrolysis of terminal non-reducing N-acetyl-D-hexosamine residues in N-acetyl-beta-D-hexosaminides.. It functions in the pathway cell wall biogenesis; peptidoglycan recycling. In terms of biological role, plays a role in peptidoglycan recycling by cleaving the terminal beta-1,4-linked N-acetylglucosamine (GlcNAc) from peptide-linked peptidoglycan fragments, giving rise to free GlcNAc, anhydro-N-acetylmuramic acid and anhydro-N-acetylmuramic acid-linked peptides. This Xylella fastidiosa (strain M23) protein is Beta-hexosaminidase.